The chain runs to 431 residues: Protein translocase subunit SecY 1 (431 aa).

Helical transmembrane passes span 18-38 (IYFT…TVPG), 67-87 (YSIF…IQLL), 115-135 (YLTL…FNAL), 150-170 (VEIA…GDEI), 178-198 (GVSV…LYQI), 215-235 (ILFF…VTWV), 268-288 (VIPV…LMAF), 312-332 (GVII…FVQV), 365-385 (LIKL…LPQL), and 392-412 (LPSS…VVLE).

Belongs to the SecY/SEC61-alpha family. Component of the Sec protein translocase complex. Heterotrimer consisting of SecY, SecE and SecG subunits. The heterotrimers can form oligomers, although 1 heterotrimer is thought to be able to translocate proteins. Interacts with the ribosome. Interacts with SecDF, and other proteins may be involved. Interacts with SecA.

The protein resides in the cell membrane. Functionally, the central subunit of the protein translocation channel SecYEG. Consists of two halves formed by TMs 1-5 and 6-10. These two domains form a lateral gate at the front which open onto the bilayer between TMs 2 and 7, and are clamped together by SecE at the back. The channel is closed by both a pore ring composed of hydrophobic SecY resides and a short helix (helix 2A) on the extracellular side of the membrane which forms a plug. The plug probably moves laterally to allow the channel to open. The ring and the pore may move independently. This Lactobacillus kefiranofaciens subsp. kefiranofaciens protein is Protein translocase subunit SecY 1.